Reading from the N-terminus, the 304-residue chain is UDP-3-O-acyl-N-acetylglucosamine deacetylase (304 aa).

Zn(2+) contacts are provided by His78, His237, and Asp241. His264 acts as the Proton donor in catalysis.

It belongs to the LpxC family. It depends on Zn(2+) as a cofactor.

The catalysed reaction is a UDP-3-O-[(3R)-3-hydroxyacyl]-N-acetyl-alpha-D-glucosamine + H2O = a UDP-3-O-[(3R)-3-hydroxyacyl]-alpha-D-glucosamine + acetate. Its pathway is glycolipid biosynthesis; lipid IV(A) biosynthesis; lipid IV(A) from (3R)-3-hydroxytetradecanoyl-[acyl-carrier-protein] and UDP-N-acetyl-alpha-D-glucosamine: step 2/6. In terms of biological role, catalyzes the hydrolysis of UDP-3-O-myristoyl-N-acetylglucosamine to form UDP-3-O-myristoylglucosamine and acetate, the committed step in lipid A biosynthesis. The protein is UDP-3-O-acyl-N-acetylglucosamine deacetylase of Legionella pneumophila (strain Paris).